Reading from the N-terminus, the 159-residue chain is MQGDPEVLRLLNEQLTTQLTAINQYFLHSKMQDNWGFTELAEHTRAESFDEMRHAEAITDRILLLDGLPNYQRLFSLRIGQTLREQFEADLAIEYEVMDRLKPAIILCREKQDSTTATLFEQIVADEEKHIDYLETQLELMDKLGVELYSAQCVSRPPS.

Positions 1–145 (MQGDPEVLRL…TQLELMDKLG (145 aa)) constitute a Ferritin-like diiron domain. Position 51 (E51) interacts with Fe cation. M52 serves as a coordination point for heme b. Fe cation is bound by residues H54, E94, E127, and H130.

This sequence belongs to the bacterioferritin family. As to quaternary structure, homooligomer of 24 subunits, arranged as 12 dimers, that are packed together to form an approximately spherical molecule with a central cavity, in which large amounts of iron can be deposited. Heme b is required as a cofactor.

The catalysed reaction is 4 Fe(2+) + O2 + 4 H(+) = 4 Fe(3+) + 2 H2O. It catalyses the reaction Fe(2+)(in) = Fe(2+)(out). Its function is as follows. Iron-storage protein, whose ferroxidase center binds Fe(2+), oxidizes it using dioxygen to Fe(3+), and participates in the subsequent Fe(3+) oxide mineral core formation within the central cavity of the BFR protein shell. This chain is Bacterioferritin (bfr), found in Mycobacterium avium.